An 82-amino-acid chain; its full sequence is Protein CYSTEINE-RICH TRANSMEMBRANE MODULE 13 (82 aa).

Residues 1-58 (MYHQEQHPVGAPPPQGYPPKDGYPPAGYPPAGYPPPGYAQGYPAQGYPPPQYSQAPQQ) are disordered. The span at 26-37 (AGYPPAGYPPPG) shows a compositional bias: pro residues. The helical transmembrane segment at 59–76 (KQNAGMLEGCLAALCCCC) threads the bilayer.

Belongs to the CYSTM1 family. As to quaternary structure, homodimer and heterodimers. Interacts with CYSTM7, CYTSM3, CYTSM4, CYTSM5, CYTSM6, CYTSM9, CYTSM10 and CYTSM11. Binds weakly to CYSTM1 and CYSTM2. In terms of tissue distribution, expressed in root meristem, root vasculature, leaf vasculature and floral organ primordia. Mostly expressed in roots and flowers and, to a lower extent, in stems, siliques and leaves.

It localises to the cell membrane. In terms of biological role, required for the promotion of megasporogenesis, or promotion of germ cell formation from somatic precursor cells. Acts redundantly with WIH2. Functions in a genetic pathway downstream of SPL/NZZ and WUS and together with TRN2 in promoting megasporogenesis. Involved in resistance to abiotic stress. The protein is Protein CYSTEINE-RICH TRANSMEMBRANE MODULE 13 of Arabidopsis thaliana (Mouse-ear cress).